The sequence spans 242 residues: Carboxy-S-adenosyl-L-methionine synthase (242 aa).

Residues Tyr-39, 64-66 (GCS), 89-90 (DN), 117-118 (DI), Asn-132, and Arg-199 each bind S-adenosyl-L-methionine.

Belongs to the class I-like SAM-binding methyltransferase superfamily. Cx-SAM synthase family. In terms of assembly, homodimer.

The enzyme catalyses prephenate + S-adenosyl-L-methionine = carboxy-S-adenosyl-L-methionine + 3-phenylpyruvate + H2O. Functionally, catalyzes the conversion of S-adenosyl-L-methionine (SAM) to carboxy-S-adenosyl-L-methionine (Cx-SAM). The sequence is that of Carboxy-S-adenosyl-L-methionine synthase from Aliivibrio salmonicida (strain LFI1238) (Vibrio salmonicida (strain LFI1238)).